Here is a 251-residue protein sequence, read N- to C-terminus: Probable transcriptional regulatory protein Franean1_5147 (251 aa).

This sequence belongs to the TACO1 family.

Its subcellular location is the cytoplasm. This Parafrankia sp. (strain EAN1pec) protein is Probable transcriptional regulatory protein Franean1_5147.